Reading from the N-terminus, the 1115-residue chain is Scavenger receptor cysteine-rich type 1 protein M130 (1115 aa).

The signal sequence occupies residues 1–46 (MDKLRMVLHENSGSADFRRCSAHLSSFTFAVVAVLSACLVTSSLGG). The Extracellular portion of the chain corresponds to 47–1044 (KDKELRLTGG…ESLHATGRSS (998 aa)). SRCR domains lie at 51-151 (LRLT…VTCS), 158-258 (MGLV…VICL), 265-365 (LRVV…VTCS), 372-472 (LRLK…ITCS), 477-577 (PRLV…VVCS), 582-682 (IRLV…VICS), 718-818 (LRLV…VICS), 823-925 (LRLI…ITCA), and 928-1028 (IRLQ…VTCS). Disulfide bonds link Cys-76–Cys-140, Cys-89–Cys-150, Cys-120–Cys-130, Cys-183–Cys-247, Cys-196–Cys-257, Cys-227–Cys-237, Cys-290–Cys-354, Cys-303–Cys-364, Cys-334–Cys-344, Cys-397–Cys-461, Cys-410–Cys-471, Cys-441–Cys-451, Cys-502–Cys-566, Cys-515–Cys-576, Cys-546–Cys-556, Cys-607–Cys-671, Cys-620–Cys-681, Cys-651–Cys-661, Cys-743–Cys-807, Cys-756–Cys-817, Cys-787–Cys-797, Cys-863–Cys-924, and Cys-894–Cys-904. N-linked (GlcNAc...) asparagine glycosylation occurs at Asn-105. A glycan (N-linked (GlcNAc...) asparagine) is linked at Asn-139. Asn-936 carries an N-linked (GlcNAc...) asparagine glycan. Cystine bridges form between Cys-953-Cys-1017, Cys-966-Cys-1027, and Cys-997-Cys-1007. Residues 1045-1065 (FVALAIFGVILLACLIAFLIW) traverse the membrane as a helical segment. The Cytoplasmic segment spans residues 1066 to 1115 (TQKRRQRQRLSVFSGGENSVHQIQYREMNSCLKADETDMLNPSGDHSEVQ). The short motif at 1090 to 1093 (YREM) is the Internalization signal element.

Interacts with CSNK2B. A soluble form (sCD163) is produced by proteolytic shedding which can be induced by lipopolysaccharide, phorbol ester and Fc region of immunoglobulin gamma. This cleavage is dependent on protein kinase C and tyrosine kinases and can be blocked by protease inhibitors. The shedding is inhibited by the tissue inhibitor of metalloproteinase TIMP3, and thus probably induced by membrane-bound metalloproteinases ADAMs. In terms of processing, phosphorylated. As to expression, expressed in monocytes and macrophages. Detected only in one population of monocytes (CD163+) which is in advanced maturation stage.

Its subcellular location is the secreted. The protein localises to the cell membrane. Involved in clearance and endocytosis of hemoglobin/haptoglobin complexes by macrophages and may thereby protect tissues from free hemoglobin-mediated oxidative damage. May play a role in the uptake and recycling of iron, via endocytosis of hemoglobin/haptoglobin and subsequent breakdown of heme. Binds hemoglobin/haptoglobin complexes in a calcium-dependent and pH-dependent manner. Induces a cascade of intracellular signals that involves tyrosine kinase-dependent calcium mobilization, inositol triphosphate production and secretion of IL6 and CSF1. May play a role in the process of infection of porcine monocytes/macrophages by African swine fever virus (ASFV). In case of porcine reproductive and respiratory syndrome virus (PRRSV), serves mediates virion attachment and plays a role in viral entry. Its function is as follows. After shedding, the soluble form (sCD163) may play an anti-inflammatory role. In Sus scrofa (Pig), this protein is Scavenger receptor cysteine-rich type 1 protein M130 (CD163).